The chain runs to 1053 residues: MIYKLAARYPIQVIAIVGILVSMAYFSFLEALTQEDFPVLIRALKRFGILDGFPNTRLPNEMILKLSSVQGEDASVWEQIPAAELGGEGFVDFDITQWYYPANAKVDVAQLVEPYRNDCIFHDASGACHFFFKEVGNWTVSSIALPSNLANPPIDYFLDSSSTVIQRILPAIREHGISWSWLLQLIARTWMNTLKIASQASKTELLIVGTAYACMLISIVSLYLKMRRLGSKFWLFFSVLLSTLFSVQFAMTLVRASGVRISLVSLIESLPFLINVVALDKAAELTRQVITRCSVSDSHSPMHEDIAKACRNAAPPILRHFSFGIVVLAIFSYCNFGIKQFFLFAAVMIYDLLLLFSFFVAILTLKLEMRRYNAKDDVRKVLIEEGLSESTARHVADGNDSSATTSAGSRYFKVRYGTKIILFIFIAFNLFELCSIPFKHYAATSAAAARLIPLVRSQYPDFKSQRLLDDGVFDDVLSAISSMSNIESPSVRLLPAVFYGAELSSTSFLSTIHSFINNWSHYISASFLSKWIVCALSLSIAVNVFLLNAARLNSIKEEPEKKVVEKVVEVVKYIPSSNSSSIDDIQKDEIAQESVVRSLEECITLYNNGQISTLNDEEVVQLTLAKKIPLYALERVLKDVTRAVVIRRTVVSRSSRTKTLESSNCPVYHYDYSRVLNACCENVIGYMPLPLGVAGPLIIDGKPFYIPMATTEGALVASTMRGCKAINAGGGAVTVLTRDQMSRGPCVAFPNLTRAGRAKIWLDSPEGQEVMKKAFNSTSRFARLQHIKTALAGTRLFIRFCTSTGDAMGMNMISKGVEHALVVMSNDAGFDDMQVISVSGNYCTDKKPAAINWIDGRGKSVIAEAIIPGDAVKSVLKTTVEDLVKLNVDKNLIGSAMAGSVGGFNAHAANIVTAVYLATGQDPAQNVESSNCITLMDNVDGNLQLSVSMPSIEVGTIGGGTVLEPQGAMLDLLGVRGAHMTSPGDNSRQLARVVAAAVMAGELSLCSALASGHLVKSHIGLNRSALNTPAMDSSAKKPATDALKSVNSRVPGR.

The Cytoplasmic segment spans residues 1–8 (MIYKLAAR). A helical transmembrane segment spans residues 9–29 (YPIQVIAIVGILVSMAYFSFL). Over 30 to 203 (EALTQEDFPV…LKIASQASKT (174 aa)) the chain is Lumenal. N-linked (GlcNAc...) asparagine glycosylation occurs at Asn-137. Residues 204 to 224 (ELLIVGTAYACMLISIVSLYL) form a helical membrane-spanning segment. The SSD domain maps to 204 to 365 (ELLIVGTAYA…FSFFVAILTL (162 aa)). Over 225–232 (KMRRLGSK) the chain is Cytoplasmic. Residues 233–253 (FWLFFSVLLSTLFSVQFAMTL) form a helical membrane-spanning segment. The Lumenal segment spans residues 254–258 (VRASG). A helical transmembrane segment spans residues 259-279 (VRISLVSLIESLPFLINVVAL). At 280–320 (DKAAELTRQVITRCSVSDSHSPMHEDIAKACRNAAPPILRH) the chain is on the cytoplasmic side. The next 2 membrane-spanning stretches (helical) occupy residues 321–341 (FSFG…IKQF) and 342–362 (FLFA…FVAI). Over 363 to 417 (LTLKLEMRRYNAKDDVRKVLIEEGLSESTARHVADGNDSSATTSAGSRYFKVRYG) the chain is Cytoplasmic. Residues 418 to 438 (TKIILFIFIAFNLFELCSIPF) form a helical membrane-spanning segment. Topologically, residues 439 to 526 (KHYAATSAAA…NNWSHYISAS (88 aa)) are lumenal. Residue Asn-518 is glycosylated (N-linked (GlcNAc...) asparagine). The helical transmembrane segment at 527-547 (FLSKWIVCALSLSIAVNVFLL) threads the bilayer. Over 548–1053 (NAARLNSIKE…KSVNSRVPGR (506 aa)) the chain is Cytoplasmic. The Charge relay system role is filled by Glu-712. 718–724 (STMRGCK) contributes to the CoA binding site. NADP(+) contacts are provided by residues 779 to 781 (SRF) and 806 to 814 (DAMGMNMIS). Lys-846 (charge relay system) is an active-site residue. 875–877 (VLK) serves as a coordination point for CoA. Asp-922 serves as the catalytic Charge relay system. Position 1017–1018 (1017–1018 (SH)) interacts with CoA. The Proton donor role is filled by His-1018. Residue 1022-1023 (NR) coordinates NADP(+). Residue Ser-1024 is modified to Phosphoserine. Thr-1028 is modified (phosphothreonine). The interval 1028 to 1053 (TPAMDSSAKKPATDALKSVNSRVPGR) is disordered.

This sequence belongs to the HMG-CoA reductase family.

The protein resides in the endoplasmic reticulum membrane. Its subcellular location is the nucleus envelope. The enzyme catalyses (R)-mevalonate + 2 NADP(+) + CoA = (3S)-3-hydroxy-3-methylglutaryl-CoA + 2 NADPH + 2 H(+). The protein operates within metabolic intermediate biosynthesis; (R)-mevalonate biosynthesis; (R)-mevalonate from acetyl-CoA: step 3/3. Functionally, part of the first module of ergosterol biosynthesis pathway that includes the early steps of the pathway, conserved across all eukaryotes, and which results in the formation of mevalonate from acetyl-coenzyme A (acetyl-CoA). Hmg1 catalyzes the reduction of hydroxymethylglutaryl-CoA (HMG-CoA) to mevalonate. The first module starts with the action of the cytosolic acetyl-CoA acetyltransferase eg10 that catalyzes the formation of acetoacetyl-CoA. The hydroxymethylglutaryl-CoA synthases erg13 then condenses acetyl-CoA with acetoacetyl-CoA to form HMG-CoA. The rate-limiting step of the early module is the reduction to mevalonate by the 3-hydroxy-3-methylglutaryl-coenzyme A (HMG-CoA) reductases hcs1. In Schizosaccharomyces pombe (strain 972 / ATCC 24843) (Fission yeast), this protein is 3-hydroxy-3-methylglutaryl-coenzyme A reductase.